The sequence spans 202 residues: MESKEQHLIRQYFILAMFFLFLAGCAQKRSLETTTYENWKTHLAEQSIWQVEGKLAFISPDERQSANLNWQQSQNNNNLVLTTFIGTRILSLKQTANTAELNYDGEQYFDTNATALLKRLTGFALPVNNADSWLKGTIDDQTLKVDQLGRAKSVLWFDSTGKKWQIEYASFVQKSGYWLPSRLTLTHQKIKIKIQLYDWQFN.

The signal sequence occupies residues 1-24; sequence MESKEQHLIRQYFILAMFFLFLAG. C25 is lipidated: N-palmitoyl cysteine. A lipid anchor (S-diacylglycerol cysteine) is attached at C25.

It belongs to the LolB family. In terms of assembly, monomer.

It is found in the cell outer membrane. Plays a critical role in the incorporation of lipoproteins in the outer membrane after they are released by the LolA protein. The protein is Outer-membrane lipoprotein LolB of Pseudoalteromonas translucida (strain TAC 125).